Reading from the N-terminus, the 1606-residue chain is Phosphatidylinositol 3,4,5-trisphosphate-dependent Rac exchanger 2 protein (1606 aa).

The region spanning 23–214 (LRVCVLSELQ…KAVCSNINEA (192 aa)) is the DH domain. In terms of domain architecture, PH spans 245 to 361 (EMLMCGVLLK…WFEAILKERE (117 aa)). DEP domains lie at 390–464 (CRQG…RFRY) and 491–566 (SLFT…FFSD). 2 PDZ domains span residues 592–671 (KSLL…VLVS) and 677–754 (TVKI…QDSI). The segment at 1581 to 1606 (GVRDRTPQSAPRLYKLCEPPPPAGEE) is disordered.

As to quaternary structure, interacts with RAC1. In terms of tissue distribution, isoform 1 is highly expressed in skeletal muscle, heart and placenta, absent from peripheral blood leukocytes. Isoform 2 is expressed in skeletal muscle, kidney, small intestine, and placenta. Isoform 3 is expressed in the heart.

Its function is as follows. Functions as a RAC1 guanine nucleotide exchange factor (GEF), activating Rac proteins by exchanging bound GDP for free GTP. Its activity is synergistically activated by phosphatidylinositol 3,4,5-trisphosphate and the beta gamma subunits of heterotrimeric G protein. Mediates the activation of RAC1 in a PI3K-dependent manner. May be an important mediator of Rac signaling, acting directly downstream of both G protein-coupled receptors and phosphoinositide 3-kinase. This chain is Phosphatidylinositol 3,4,5-trisphosphate-dependent Rac exchanger 2 protein, found in Homo sapiens (Human).